The sequence spans 296 residues: Large ribosomal subunit protein uL18A (296 aa).

The tract at residues 251 to 296 (PVHEKKPKKEVKKKRWNRAKLSLEQKKDRVAQKKASFLRAQEKADS) is disordered. The segment covering 255–268 (KKPKKEVKKKRWNR) has biased composition (basic residues). The span at 271 to 281 (LSLEQKKDRVA) shows a compositional bias: basic and acidic residues.

Belongs to the universal ribosomal protein uL18 family. Component of the large ribosomal subunit (LSU). Part of a LSU subcomplex, the 5S RNP which is composed of the 5S RNA, RPL5 and RPL11.

Its subcellular location is the cytoplasm. It is found in the nucleus. The protein resides in the nucleolus. Component of the ribosome, a large ribonucleoprotein complex responsible for the synthesis of proteins in the cell. The small ribosomal subunit (SSU) binds messenger RNAs (mRNAs) and translates the encoded message by selecting cognate aminoacyl-transfer RNA (tRNA) molecules. The large subunit (LSU) contains the ribosomal catalytic site termed the peptidyl transferase center (PTC), which catalyzes the formation of peptide bonds, thereby polymerizing the amino acids delivered by tRNAs into a polypeptide chain. The nascent polypeptides leave the ribosome through a tunnel in the LSU and interact with protein factors that function in enzymatic processing, targeting, and the membrane insertion of nascent chains at the exit of the ribosomal tunnel. As part of the 5S RNP/5S ribonucleoprotein particle it is an essential component of the LSU, required for its formation and the maturation of rRNAs. It also couples ribosome biogenesis to p53/TP53 activation. As part of the 5S RNP it accumulates in the nucleoplasm and inhibits MDM2, when ribosome biogenesis is perturbed, mediating the stabilization and the activation of TP53. The polypeptide is Large ribosomal subunit protein uL18A (rpl5-a) (Xenopus laevis (African clawed frog)).